Reading from the N-terminus, the 64-residue chain is Disintegrin (64 aa).

The Disintegrin domain maps to 1–64 (NSVHPCCDPV…SDCPRNRYNH (64 aa)). 4 disulfides stabilise this stretch: cysteine 6-cysteine 29, cysteine 20-cysteine 26, cysteine 25-cysteine 50, and cysteine 38-cysteine 57. A Cell attachment site; atypical (MLD) motif is present at residues 42-44 (MLD).

This sequence belongs to the disintegrin family. Dimeric disintegrin subfamily. Heterodimer; disulfide-linked. In terms of tissue distribution, expressed by the venom gland.

It localises to the secreted. Inhibits adhesion of cells expressing alpha-4/beta-1 (ITGA4/ITGB1) and alpha-4/beta-7 (ITGA4/ITGB7) integrins to the natural ligands vascular cell adhesion molecule 1 (VCAM-1) and mucosal addressin cell adhesion molecule 1 (MADCAM-1). This chain is Disintegrin, found in Echis carinatus (Saw-scaled viper).